We begin with the raw amino-acid sequence, 281 residues long: uncharacterized protein (281 aa).

This is an uncharacterized protein from Acanthamoeba polyphaga (Amoeba).